A 94-amino-acid chain; its full sequence is Co-chaperonin GroES (94 aa).

Belongs to the GroES chaperonin family. As to quaternary structure, heptamer of 7 subunits arranged in a ring. Interacts with the chaperonin GroEL.

Its subcellular location is the cytoplasm. Its function is as follows. Together with the chaperonin GroEL, plays an essential role in assisting protein folding. The GroEL-GroES system forms a nano-cage that allows encapsulation of the non-native substrate proteins and provides a physical environment optimized to promote and accelerate protein folding. GroES binds to the apical surface of the GroEL ring, thereby capping the opening of the GroEL channel. The sequence is that of Co-chaperonin GroES from Streptococcus pneumoniae (strain ATCC BAA-255 / R6).